The following is a 74-amino-acid chain: Molt-inhibiting hormone (74 aa).

At Q1 the chain carries Pyrrolidone carboxylic acid. 3 cysteine pairs are disulfide-bonded: C7/C43, C23/C39, and C26/C52. V72 carries the post-translational modification Valine amide.

Its subcellular location is the secreted. Inhibits Y-organs where molting hormone (ecdysteroid) is secreted. A molting cycle is initiated when MIH secretion diminishes or stops. This Procambarus bouvieri (Mexican crayfish) protein is Molt-inhibiting hormone.